We begin with the raw amino-acid sequence, 189 residues long: Large ribosomal subunit protein uL6 (189 aa).

Belongs to the universal ribosomal protein uL6 family. Part of the 50S ribosomal subunit.

This protein binds to the 23S rRNA, and is important in its secondary structure. It is located near the subunit interface in the base of the L7/L12 stalk, and near the tRNA binding site of the peptidyltransferase center. This is Large ribosomal subunit protein uL6 from Bacteroides fragilis (strain ATCC 25285 / DSM 2151 / CCUG 4856 / JCM 11019 / LMG 10263 / NCTC 9343 / Onslow / VPI 2553 / EN-2).